The sequence spans 184 residues: Pyridoxal 5'-phosphate synthase subunit PdxT (184 aa).

Gly46–Ser48 serves as a coordination point for L-glutamine. The active-site Nucleophile is Cys75. L-glutamine is bound by residues Arg101 and Ile129–Arg130. Active-site charge relay system residues include His165 and Glu167.

Belongs to the glutaminase PdxT/SNO family. In the presence of PdxS, forms a dodecamer of heterodimers. Only shows activity in the heterodimer.

It carries out the reaction aldehydo-D-ribose 5-phosphate + D-glyceraldehyde 3-phosphate + L-glutamine = pyridoxal 5'-phosphate + L-glutamate + phosphate + 3 H2O + H(+). The enzyme catalyses L-glutamine + H2O = L-glutamate + NH4(+). The protein operates within cofactor biosynthesis; pyridoxal 5'-phosphate biosynthesis. Catalyzes the hydrolysis of glutamine to glutamate and ammonia as part of the biosynthesis of pyridoxal 5'-phosphate. The resulting ammonia molecule is channeled to the active site of PdxS. This chain is Pyridoxal 5'-phosphate synthase subunit PdxT, found in Staphylococcus haemolyticus (strain JCSC1435).